We begin with the raw amino-acid sequence, 301 residues long: J domain-containing protein 1 (301 aa).

In terms of domain architecture, J spans 58–150 (TPYDIFGIPK…KKKIVYDTTR (93 aa)). The chain crosses the membrane as a helical span at residues 208 to 228 (WTVIGIICGLAICIEGTALLA).

The protein belongs to the DnaJ family.

Its subcellular location is the mitochondrion membrane. In terms of biological role, probable chaperone. The chain is J domain-containing protein 1 (JID1) from Saccharomyces cerevisiae (strain ATCC 204508 / S288c) (Baker's yeast).